A 108-amino-acid polypeptide reads, in one-letter code: UPF0166 protein MJ1524 (108 aa).

It belongs to the UPF0166 family.

This Methanocaldococcus jannaschii (strain ATCC 43067 / DSM 2661 / JAL-1 / JCM 10045 / NBRC 100440) (Methanococcus jannaschii) protein is UPF0166 protein MJ1524.